The chain runs to 320 residues: Reticulocalbin-2 (320 aa).

The signal sequence occupies residues M1–A25. 2 consecutive EF-hand domains span residues E64–H99 and Y100–D135. The Ca(2+) site is built by D77, D79, D81, E88, D113, N115, D117, T119, and E124. Phosphothreonine is present on T140. EF-hand domains are found at residues F150–E185, M189–A224, W230–G265, and I266–S301. Ca(2+) is bound by residues D167, E176, D202, N204, D206, E213, D243, D245, D247, R249, E254, D279, N281, D283, K285, and E290. Residues H317–L320 carry the Prevents secretion from ER motif.

The protein belongs to the CREC family. In terms of assembly, binds the snake venom phospholipase complex taipoxin. As to expression, ubiquitous.

It is found in the endoplasmic reticulum lumen. In terms of biological role, not known. Binds calcium. The protein is Reticulocalbin-2 (Rcn2) of Rattus norvegicus (Rat).